The following is a 451-amino-acid chain: MRLDEIKNLNFLVMGLGLNGGGVALSRFLLKHGAKLVITDLKSEAELALSIDSLRDFDDQIRYVLGKHDVNDFKKADIVVKNPSVRPNNKYLKLAKRVETDISLFLIFNKNPIIAVTGTKGKSTLVSLLYQALKKKYPRVKLGGNIGVSPLSFFDQLDGKSPLILELSSWQLQSLENFNPILSIITNVYNDHQNYYSNFDDYIIDKSKIFVNQTSGIVIIQDKAYYKYFSKFESKAKVILFSEFNPCNLDQDIFYSNKGEVYFNDNLIGSFFESQVVFMIPKLIAFFVAYYLNIDLNHMFQILKNFKGIEHRLEFVKLVRNVMFYNDTASTIPDSTVLSVKSLKTNDNCINLIVGGTDKNLDFSSFSKIINLVKAWILIKGSATVKIINVLEKSSIQYFVFDSLRGAVNYAFEISSPGDIVLFSPASASFELFNNEFDRGLQFKKLVDMLG.

118–124 (GTKGKST) provides a ligand contact to ATP.

This sequence belongs to the MurCDEF family.

The protein localises to the cytoplasm. It carries out the reaction UDP-N-acetyl-alpha-D-muramoyl-L-alanine + D-glutamate + ATP = UDP-N-acetyl-alpha-D-muramoyl-L-alanyl-D-glutamate + ADP + phosphate + H(+). It functions in the pathway cell wall biogenesis; peptidoglycan biosynthesis. Its function is as follows. Cell wall formation. Catalyzes the addition of glutamate to the nucleotide precursor UDP-N-acetylmuramoyl-L-alanine (UMA). This is UDP-N-acetylmuramoylalanine--D-glutamate ligase from Borreliella afzelii (strain PKo) (Borrelia afzelii).